The following is a 261-amino-acid chain: Cytochrome c oxidase subunit 3 (261 aa).

At 1–15 the chain is on the mitochondrial matrix side; it reads MAHQSHAYHMVKPSP. A helical membrane pass occupies residues 16–34; that stretch reads WPLTGALSALLTTSGLTMW. Over 35-40 the chain is Mitochondrial intermembrane; sequence FHFHST. A helical transmembrane segment spans residues 41–66; that stretch reads TLLLTGLLTNALTMYQWWRDVVREST. At 67-72 the chain is on the mitochondrial matrix side; that stretch reads YQGHHT. A helical transmembrane segment spans residues 73-105; sequence LPVQKGLRYGMILFITSEVFFFAGFFWAFYHSS. At 106-128 the chain is on the mitochondrial intermembrane side; that stretch reads LAPTPQLGGHWPPTGIIPLNPLE. The chain crosses the membrane as a helical span at residues 129–152; that stretch reads VPLLNTSVLLASGVSITWAHHSLM. Topologically, residues 153–155 are mitochondrial matrix; that stretch reads ENN. The chain crosses the membrane as a helical span at residues 156 to 183; the sequence is RTQMIQALLITILLGIYFTLLQASEYIE. The Mitochondrial intermembrane segment spans residues 184 to 190; that stretch reads APFTISD. A helical transmembrane segment spans residues 191–223; that stretch reads GIYGSTFFMATGFHGLHVIIGSTFLTVCLARQL. Topologically, residues 224 to 232 are mitochondrial matrix; the sequence is LFHFTSKHH. Residues 233–256 form a helical membrane-spanning segment; that stretch reads FGFEAAAWYWHFVDVVWLFLYVSI. Residues 257 to 261 are Mitochondrial intermembrane-facing; sequence YWWGS.

The protein belongs to the cytochrome c oxidase subunit 3 family. As to quaternary structure, component of the cytochrome c oxidase (complex IV, CIV), a multisubunit enzyme composed of 14 subunits. The complex is composed of a catalytic core of 3 subunits MT-CO1, MT-CO2 and MT-CO3, encoded in the mitochondrial DNA, and 11 supernumerary subunits COX4I, COX5A, COX5B, COX6A, COX6B, COX6C, COX7A, COX7B, COX7C, COX8 and NDUFA4, which are encoded in the nuclear genome. The complex exists as a monomer or a dimer and forms supercomplexes (SCs) in the inner mitochondrial membrane with NADH-ubiquinone oxidoreductase (complex I, CI) and ubiquinol-cytochrome c oxidoreductase (cytochrome b-c1 complex, complex III, CIII), resulting in different assemblies (supercomplex SCI(1)III(2)IV(1) and megacomplex MCI(2)III(2)IV(2)).

It is found in the mitochondrion inner membrane. The enzyme catalyses 4 Fe(II)-[cytochrome c] + O2 + 8 H(+)(in) = 4 Fe(III)-[cytochrome c] + 2 H2O + 4 H(+)(out). Functionally, component of the cytochrome c oxidase, the last enzyme in the mitochondrial electron transport chain which drives oxidative phosphorylation. The respiratory chain contains 3 multisubunit complexes succinate dehydrogenase (complex II, CII), ubiquinol-cytochrome c oxidoreductase (cytochrome b-c1 complex, complex III, CIII) and cytochrome c oxidase (complex IV, CIV), that cooperate to transfer electrons derived from NADH and succinate to molecular oxygen, creating an electrochemical gradient over the inner membrane that drives transmembrane transport and the ATP synthase. Cytochrome c oxidase is the component of the respiratory chain that catalyzes the reduction of oxygen to water. Electrons originating from reduced cytochrome c in the intermembrane space (IMS) are transferred via the dinuclear copper A center (CU(A)) of subunit 2 and heme A of subunit 1 to the active site in subunit 1, a binuclear center (BNC) formed by heme A3 and copper B (CU(B)). The BNC reduces molecular oxygen to 2 water molecules using 4 electrons from cytochrome c in the IMS and 4 protons from the mitochondrial matrix. The sequence is that of Cytochrome c oxidase subunit 3 (MT-CO3) from Pongo abelii (Sumatran orangutan).